We begin with the raw amino-acid sequence, 113 residues long: Ribosome-associated factor Y (113 aa).

K66 is subject to N6-acetyllysine. Positions 91 to 113 are disordered; that stretch reads KGEARRAATSVKDANFVEEVEEE.

The protein belongs to the HPF/YfiA ribosome-associated protein family. YfiA subfamily. Associates mainly with 70S ribosomes.

In terms of biological role, during stationary phase, prevents 70S dimer formation, probably in order to regulate translation efficiency during transition between the exponential and the stationary phases. In addition, during environmental stress such as cold shock or excessive cell density at stationary phase, stabilizes the 70S ribosome against dissociation, inhibits translation initiation and increase translation accuracy. When normal growth conditions are restored, is quickly released from the ribosome. The protein is Ribosome-associated factor Y of Escherichia coli O157:H7.